A 238-amino-acid chain; its full sequence is MSDSKEMGKRQLRPLDEELLTSSHTRHSIKGFGFQTNSGFSSFTGCLVHSQVPLALQVLFLAVCSVLLVVILVKVYKIPSSQEENNQMNVYQELTQLKAGVDRLCRSCPWDWTHFQGSCYFFSVAQKSWNDSATACHNVGAQLVVIKSDEEQNFLQQTSKKRGYTWMGLIDMSKESTWYWVDGSPLTLSFMKYWSKGEPNNLGEEDCAEFRDDGWNDTKCTNKKFWICKKLSTSCPSK.

The Cytoplasmic segment spans residues 1 to 51 (MSDSKEMGKRQLRPLDEELLTSSHTRHSIKGFGFQTNSGFSSFTGCLVHSQ). The chain crosses the membrane as a helical; Signal-anchor for type II membrane protein span at residues 52-72 (VPLALQVLFLAVCSVLLVVIL). Over 73–238 (VKVYKIPSSQ…KKLSTSCPSK (166 aa)) the chain is Extracellular. Cys108 and Cys119 form a disulfide bridge. The 115-residue stretch at 115 to 229 (FQGSCYFFSV…CTNKKFWICK (115 aa)) folds into the C-type lectin domain. Asn130 is a glycosylation site (N-linked (GlcNAc...) asparagine). Intrachain disulfides connect Cys136/Cys228 and Cys207/Cys220. Ca(2+) contacts are provided by Glu198, Asn200, Leu202, Glu205, Asn216, and Asp217. Asn216 carries an N-linked (GlcNAc...) asparagine glycan.

In terms of tissue distribution, predominantly expressed in dendritic cells. Detected at very low levels in lung, spleen, lymph nodes and bone marrow.

Its subcellular location is the membrane. Its function is as follows. Probable pathogen-recognition receptor. May mediate the endocytosis of pathogens which are subsequently degraded in lysosomal compartments. May recognize in a calcium-dependent manner high mannose N-linked oligosaccharides in a variety of pathogen antigens. The sequence is that of CD209 antigen-like protein A (Cd209a) from Mus musculus (Mouse).